The chain runs to 1027 residues: Contactin-5 (1027 aa).

Residues 1–19 form the signal peptide; it reads MMWLSWKLFLFLSLIGCLS. 6 Ig-like C2-type domains span residues 32 to 117, 123 to 209, 227 to 307, 317 to 401, 407 to 494, and 498 to 593; these read PDDV…AVLQ, NFSG…RVLS, PKIE…RNVF, PQWV…AELK, PTFP…ASVS, and PTRI…TELL. Cys50 and Cys100 are joined by a disulfide. Asn65 and Asn123 each carry an N-linked (GlcNAc...) asparagine glycan. Disulfide bonds link Cys144–Cys196 and Cys249–Cys296. 3 N-linked (GlcNAc...) asparagine glycosylation sites follow: Asn324, Asn376, and Asn467. Disulfide bonds link Cys338-Cys385, Cys430-Cys478, and Cys520-Cys577. 4 consecutive Fibronectin type-III domains span residues 600 to 698, 703 to 800, 805 to 899, and 901 to 994; these read PPGV…TNEA, PPAN…SAEG, APID…TKKS, and PSQA…SYAG. N-linked (GlcNAc...) asparagine glycosylation is found at Asn706, Asn743, Asn858, and Asn929. Ser999 is lipidated: GPI-anchor amidated serine. The propeptide at 1000–1027 is removed in mature form; sequence AQSTLHMFSTSSSSVTLLLVLMVPSTSW.

It belongs to the immunoglobulin superfamily. Contactin family. Interacts with INgCAM/L1 and the tenascin-R TNP protein. Does not interacts with NrCAM. Expressed by subpopulations of Purkinje cells in the cerebellum. Also expressed by one type of Purkinje cell afferents, the climbing fibers.

Its subcellular location is the cell membrane. Functionally, contactins mediate cell surface interactions during nervous system development. May contribute to the formation of somatotopic maps of cerebellar afferents during the development of the nervous system. The polypeptide is Contactin-5 (CNTN5) (Gallus gallus (Chicken)).